A 193-amino-acid polypeptide reads, in one-letter code: dCTP deaminase (193 aa).

Residues 110–115, D128, 136–138, Y171, K178, and Q182 contribute to the dCTP site; these read RSSLAR and VLE. E138 (proton donor/acceptor) is an active-site residue. Basic and acidic residues predominate over residues 170-181; it reads PYNRRQDAKYRD. The interval 170-193 is disordered; it reads PYNRRQDAKYRDQQGAVASRIDKD.

Belongs to the dCTP deaminase family. As to quaternary structure, homotrimer.

It catalyses the reaction dCTP + H2O + H(+) = dUTP + NH4(+). It functions in the pathway pyrimidine metabolism; dUMP biosynthesis; dUMP from dCTP (dUTP route): step 1/2. Catalyzes the deamination of dCTP to dUTP. The chain is dCTP deaminase from Enterobacter sp. (strain 638).